We begin with the raw amino-acid sequence, 77 residues long: Large ribosomal subunit protein bL28 (77 aa).

The protein belongs to the bacterial ribosomal protein bL28 family.

This chain is Large ribosomal subunit protein bL28, found in Acidovorax ebreus (strain TPSY) (Diaphorobacter sp. (strain TPSY)).